The chain runs to 199 residues: Charged multivesicular body protein 1b (199 aa).

Positions 26–48 (DKEEKAEKAKIKKAIQKGNMEVA) form a coiled coil. Positions 132 to 156 (MEDTMSSTTTLTTPQGQVDMLLQEM) are interaction with IST1. The tract at residues 167-199 (ELPQGQTGSVGTSVASAEQDELSQRLARLRDQV) is disordered. Polar residues predominate over residues 170-182 (QGQTGSVGTSVAS). The interaction with SPAST stretch occupies residues 174–199 (GSVGTSVASAEQDELSQRLARLRDQV). Residues 178 to 199 (TSVASAEQDELSQRLARLRDQV) are a coiled coil. The tract at residues 180–196 (VASAEQDELSQRLARLR) is interaction with VPS4A, MITD1 and STAMBP. The interaction with VTA1 stretch occupies residues 180–199 (VASAEQDELSQRLARLRDQV). The interval 183 to 199 (AEQDELSQRLARLRDQV) is interaction with VPS4B. Residues 186–196 (DELSQRLARLR) carry the MIT-interacting motif motif.

The protein belongs to the SNF7 family. Probable peripherally associated component of the endosomal sorting required for transport complex III (ESCRT-III). ESCRT-III components are thought to multimerize to form a flat lattice on the perimeter membrane of the endosome. Several assembly forms of ESCRT-III may exist that interact and act sequentially. Interacts with CHMP1A. Interacts with VTA1; the interaction probably involves the open conformation of CHMP1B. Interacts with CHMP2A. Interacts with VPS4A; the interaction is direct. Interacts with VPS4B; the interaction is direct. Interacts with SPAST (via MIT domain); the interaction is direct. Interacts with IST1. Interacts with MITD1. Interacts with STAMBP.

The protein localises to the cytoplasm. It is found in the cytosol. It localises to the endosome. The protein resides in the late endosome membrane. Probable peripherally associated component of the endosomal sorting required for transport complex III (ESCRT-III) which is involved in multivesicular bodies (MVBs) formation and sorting of endosomal cargo proteins into MVBs. MVBs contain intraluminal vesicles (ILVs) that are generated by invagination and scission from the limiting membrane of the endosome and mostly are delivered to lysosomes enabling degradation of membrane proteins, such as stimulated growth factor receptors, lysosomal enzymes and lipids. The MVB pathway appears to require the sequential function of ESCRT-O, -I,-II and -III complexes. ESCRT-III proteins mostly dissociate from the invaginating membrane before the ILV is released. The ESCRT machinery also functions in topologically equivalent membrane fission events, such as the terminal stages of cytokinesis and the budding of enveloped viruses (lentiviruses). ESCRT-III proteins are believed to mediate the necessary vesicle extrusion and/or membrane fission activities, possibly in conjunction with the AAA ATPase VPS4. Involved in cytokinesis. Involved in recruiting VPS4A and/or VPS4B and SPAST to the midbody of dividing cells. This is Charged multivesicular body protein 1b (CHMP1B) from Bos taurus (Bovine).